The following is a 708-amino-acid chain: Elongation factor G (708 aa).

A tr-type G domain is found at 8 to 290 (KRYRNIGISA…AVIQYLPAPM (283 aa)). Residues 17-24 (AHIDAGKT), 88-92 (DTPGH), and 142-145 (NKMD) contribute to the GTP site.

It belongs to the TRAFAC class translation factor GTPase superfamily. Classic translation factor GTPase family. EF-G/EF-2 subfamily.

The protein resides in the cytoplasm. Functionally, catalyzes the GTP-dependent ribosomal translocation step during translation elongation. During this step, the ribosome changes from the pre-translocational (PRE) to the post-translocational (POST) state as the newly formed A-site-bound peptidyl-tRNA and P-site-bound deacylated tRNA move to the P and E sites, respectively. Catalyzes the coordinated movement of the two tRNA molecules, the mRNA and conformational changes in the ribosome. In Psychrobacter arcticus (strain DSM 17307 / VKM B-2377 / 273-4), this protein is Elongation factor G.